A 578-amino-acid polypeptide reads, in one-letter code: Probable arginine--tRNA ligase, mitochondrial (578 aa).

The transit peptide at 1 to 16 (MACGFRRAIACQLSRV) directs the protein to the mitochondrion. L-arginine-binding positions include 133–135 (SPN), His-144, Tyr-322, Asp-326, and Gln-350. Positions 133-144 (SPNVAKKFHVGH) match the 'HIGH' region motif. Lys-568 carries the post-translational modification N6-acetyllysine.

This sequence belongs to the class-I aminoacyl-tRNA synthetase family.

The protein resides in the mitochondrion membrane. The catalysed reaction is tRNA(Arg) + L-arginine + ATP = L-arginyl-tRNA(Arg) + AMP + diphosphate. Catalyzes the attachment of arginine to tRNA(Arg) in a two-step reaction: arginine is first activated by ATP to form Arg-AMP and then transferred to the acceptor end of tRNA(Arg). The protein is Probable arginine--tRNA ligase, mitochondrial (RARS2) of Pongo abelii (Sumatran orangutan).